We begin with the raw amino-acid sequence, 496 residues long: L-arabinose isomerase (496 aa).

Glutamate 305, glutamate 330, histidine 347, and histidine 446 together coordinate Mn(2+).

Belongs to the arabinose isomerase family. Requires Mn(2+) as cofactor.

The catalysed reaction is beta-L-arabinopyranose = L-ribulose. It functions in the pathway carbohydrate degradation; L-arabinose degradation via L-ribulose; D-xylulose 5-phosphate from L-arabinose (bacterial route): step 1/3. Its function is as follows. Catalyzes the conversion of L-arabinose to L-ribulose. The sequence is that of L-arabinose isomerase from Bacillus subtilis (strain 168).